A 608-amino-acid polypeptide reads, in one-letter code: Protein FAM151A (608 aa).

The chain crosses the membrane as a helical span at residues 14 to 34 (WILAGSVTVTLVLAISLILGL). Positions 586 to 596 (VSSNRPSSRIG) are enriched in polar residues. A disordered region spans residues 586 to 608 (VSSNRPSSRIGPSSVEGFPGESR).

This sequence belongs to the menorin family.

The protein localises to the membrane. In Mus musculus (Mouse), this protein is Protein FAM151A (Fam151a).